A 116-amino-acid chain; its full sequence is POU domain, class 4, transcription factor 1 (116 aa).

One can recognise a POU-specific domain in the interval 1–54; that stretch reads VTQADVGSALANLKIPGVGSLSQSTICRFESLTLSHNNMIALKPILQAWLEEAE. Positions 56 to 79 are disordered; that stretch reads AQREKMNKPELFNGGEKKRKRTSI. A DNA-binding region (homeobox) is located at residues 72–116; the sequence is KKRKRTSIAAPEKRSLEAYFAVQPRPSSEKIAAIAEKLDLKKNVV.

The protein belongs to the POU transcription factor family. Class-4 subfamily.

It is found in the nucleus. The protein localises to the cytoplasm. In terms of biological role, multifunctional transcription factor with different regions mediating its different effects. Acts by binding (via its C-terminal domain) to sequences related to the consensus octamer motif 5'-ATGCAAAT-3' in the regulatory regions of its target genes. Regulates the expression of specific genes involved in differentiation and survival within a subset of neuronal lineages. It has been shown that activation of some of these genes requires its N-terminal domain, maybe through a neuronal-specific cofactor. This chain is POU domain, class 4, transcription factor 1 (POU4F1), found in Gallus gallus (Chicken).